Reading from the N-terminus, the 200-residue chain is NADH-quinone oxidoreductase subunit C (200 aa).

Belongs to the complex I 30 kDa subunit family. As to quaternary structure, NDH-1 is composed of 14 different subunits. Subunits NuoB, C, D, E, F, and G constitute the peripheral sector of the complex.

It localises to the cell inner membrane. It carries out the reaction a quinone + NADH + 5 H(+)(in) = a quinol + NAD(+) + 4 H(+)(out). Functionally, NDH-1 shuttles electrons from NADH, via FMN and iron-sulfur (Fe-S) centers, to quinones in the respiratory chain. The immediate electron acceptor for the enzyme in this species is believed to be ubiquinone. Couples the redox reaction to proton translocation (for every two electrons transferred, four hydrogen ions are translocated across the cytoplasmic membrane), and thus conserves the redox energy in a proton gradient. The polypeptide is NADH-quinone oxidoreductase subunit C (Ralstonia pickettii (strain 12J)).